We begin with the raw amino-acid sequence, 321 residues long: Leucine-rich repeat-containing protein 46 (321 aa).

LRR repeat units lie at residues 45 to 66 (ELQT…EGLQ), 67 to 88 (NLHS…ACIP), 89 to 110 (SLRF…LDLP), and 111 to 132 (CLQF…EFPQ). The LRRCT domain maps to 142–184 (NSCTNQDGYRELVTEALPLLLDLDGQPVVERWISDEEDEASSD). 2 positions are modified to phosphoserine: Ser-175 and Ser-182. The stretch at 201-221 (LKELEQELSRHREHRQQTALT) forms a coiled coil. Residues 235 to 321 (DLPLLPGVPM…TKTTAKRSKK (87 aa)) are disordered.

The protein localises to the cell projection. It localises to the cilium. It is found in the flagellum. Required for normal spermatogenesis and male fertility. Plays an important role in sperm flagellum biogenesis. The chain is Leucine-rich repeat-containing protein 46 (LRRC46) from Homo sapiens (Human).